The chain runs to 227 residues: Cytochrome c oxidase subunit 2 (227 aa).

Topologically, residues 1-14 (MAYPMQLGFQDATS) are mitochondrial intermembrane. A helical membrane pass occupies residues 15 to 45 (PIMEELLHFHDHTLMIVFLISSLVLYVISLM). Topologically, residues 46 to 59 (LTTKLTHTSTMDAQ) are mitochondrial matrix. Residues 60–87 (EVETIWTILPAIILILIALPSLRILYMM) form a helical membrane-spanning segment. Residues 88-227 (DEINNPSLTV…YFEKWSASML (140 aa)) lie on the Mitochondrial intermembrane side of the membrane. Cu cation is bound by residues histidine 161, cysteine 196, glutamate 198, cysteine 200, histidine 204, and methionine 207. Glutamate 198 is a binding site for Mg(2+).

The protein belongs to the cytochrome c oxidase subunit 2 family. In terms of assembly, component of the cytochrome c oxidase (complex IV, CIV), a multisubunit enzyme composed of 14 subunits. The complex is composed of a catalytic core of 3 subunits MT-CO1, MT-CO2 and MT-CO3, encoded in the mitochondrial DNA, and 11 supernumerary subunits COX4I, COX5A, COX5B, COX6A, COX6B, COX6C, COX7A, COX7B, COX7C, COX8 and NDUFA4, which are encoded in the nuclear genome. The complex exists as a monomer or a dimer and forms supercomplexes (SCs) in the inner mitochondrial membrane with NADH-ubiquinone oxidoreductase (complex I, CI) and ubiquinol-cytochrome c oxidoreductase (cytochrome b-c1 complex, complex III, CIII), resulting in different assemblies (supercomplex SCI(1)III(2)IV(1) and megacomplex MCI(2)III(2)IV(2)). Found in a complex with TMEM177, COA6, COX18, COX20, SCO1 and SCO2. Interacts with TMEM177 in a COX20-dependent manner. Interacts with COX20. Interacts with COX16. It depends on Cu cation as a cofactor.

Its subcellular location is the mitochondrion inner membrane. The catalysed reaction is 4 Fe(II)-[cytochrome c] + O2 + 8 H(+)(in) = 4 Fe(III)-[cytochrome c] + 2 H2O + 4 H(+)(out). Its function is as follows. Component of the cytochrome c oxidase, the last enzyme in the mitochondrial electron transport chain which drives oxidative phosphorylation. The respiratory chain contains 3 multisubunit complexes succinate dehydrogenase (complex II, CII), ubiquinol-cytochrome c oxidoreductase (cytochrome b-c1 complex, complex III, CIII) and cytochrome c oxidase (complex IV, CIV), that cooperate to transfer electrons derived from NADH and succinate to molecular oxygen, creating an electrochemical gradient over the inner membrane that drives transmembrane transport and the ATP synthase. Cytochrome c oxidase is the component of the respiratory chain that catalyzes the reduction of oxygen to water. Electrons originating from reduced cytochrome c in the intermembrane space (IMS) are transferred via the dinuclear copper A center (CU(A)) of subunit 2 and heme A of subunit 1 to the active site in subunit 1, a binuclear center (BNC) formed by heme A3 and copper B (CU(B)). The BNC reduces molecular oxygen to 2 water molecules using 4 electrons from cytochrome c in the IMS and 4 protons from the mitochondrial matrix. In Gazella spekei (Speke's gazelle), this protein is Cytochrome c oxidase subunit 2 (MT-CO2).